The chain runs to 702 residues: Ribosomal RNA large subunit methyltransferase K/L (702 aa).

A THUMP domain is found at 43–154 (LIYQSLMWSR…KETAHISLDL (112 aa)).

This sequence belongs to the methyltransferase superfamily. RlmKL family.

Its subcellular location is the cytoplasm. It catalyses the reaction guanosine(2445) in 23S rRNA + S-adenosyl-L-methionine = N(2)-methylguanosine(2445) in 23S rRNA + S-adenosyl-L-homocysteine + H(+). The catalysed reaction is guanosine(2069) in 23S rRNA + S-adenosyl-L-methionine = N(2)-methylguanosine(2069) in 23S rRNA + S-adenosyl-L-homocysteine + H(+). Functionally, specifically methylates the guanine in position 2445 (m2G2445) and the guanine in position 2069 (m7G2069) of 23S rRNA. This chain is Ribosomal RNA large subunit methyltransferase K/L, found in Enterobacter sp. (strain 638).